Here is a 365-residue protein sequence, read N- to C-terminus: Glycolaldehyde reductase (365 aa).

NAD(+)-binding residues include Asp37, Gly94, Lys95, Thr116, Ser119, Ser125, Leu127, and Tyr131. Zn(2+)-binding residues include Asp171, His254, and His271.

The protein belongs to the iron-containing alcohol dehydrogenase family. The cofactor is Zn(2+).

The catalysed reaction is ethylene glycol + NAD(+) = glycolaldehyde + NADH + H(+). Its activity is regulated as follows. Is subject to substrate inhibition. Functionally, oxidoreductase involved in the non-carboxylating pentose bisphosphate pathway, a nucleoside degradation pathway present in some halophilic archaea. Catalyzes the reduction of glycolaldehyde to ethylene glycol. Cannot catalyze the oxidation of glycerol 1-phosphate nor the reduction of dihydroxyacetone phosphate (DHAP). In Halobacterium salinarum (strain ATCC 700922 / JCM 11081 / NRC-1) (Halobacterium halobium), this protein is Glycolaldehyde reductase.